A 118-amino-acid chain; its full sequence is DNA-binding protein M164_1799 (118 aa).

It belongs to the PDCD5 family.

In Saccharolobus islandicus (strain M.16.4 / Kamchatka #3) (Sulfolobus islandicus), this protein is DNA-binding protein M164_1799.